We begin with the raw amino-acid sequence, 238 residues long: MNDFLNSTSTVPEFVGASEIGDTIGMVIPRVDQQLLDKLHVTKQYKTLGILSDRTGAGPQIMAMDEGIKATNMECIDVEWPRDTKGGGGHGCLIIIGGDDPADARQAIRVALDNLHRTFGDVYNAKAGHLELQFTARAAGAAHLGLGAVEGKAFGLICGCPSGIGVVMGDKALKTAGVEPLNFTSPSHGTSFSNEGCLTITGDSGAVRQAVMAGREVGLKLLSQFGEEPVNDFPSYIK.

BMC circularly permuted domains lie at 14–125 (FVGA…VYNA) and 126–225 (KAGH…LSQF). The cysteines at positions 158 and 197 are disulfide-linked.

This sequence belongs to the EutL/PduB family. As to quaternary structure, homotrimerizes to form a pseudohexamer with a central pore 7.5 Angstroms wide and 22 Angstroms long; the pore channel in the crystal binds up to 4 glycerol molecules. A disulfide bond forms in the pore, it is not clear if this is an artifact. The trimers pack into an array.

The protein localises to the bacterial microcompartment. It functions in the pathway polyol metabolism; 1,2-propanediol degradation. One of the major shell proteins of the bacterial microcompartment (BMC) dedicated to 1,2-propanediol (1,2-PD) degradation. Probably involved in a propanediol fermentation/reuterin formation pathway. This Limosilactobacillus reuteri (strain DSM 20016) (Lactobacillus reuteri) protein is Bacterial microcompartment shell protein PduB.